The chain runs to 257 residues: tRNA (guanine-N(1)-)-methyltransferase (257 aa).

Residues glycine 117 and 137–142 (LGDFVL) contribute to the S-adenosyl-L-methionine site.

It belongs to the RNA methyltransferase TrmD family. As to quaternary structure, homodimer.

It is found in the cytoplasm. The enzyme catalyses guanosine(37) in tRNA + S-adenosyl-L-methionine = N(1)-methylguanosine(37) in tRNA + S-adenosyl-L-homocysteine + H(+). Functionally, specifically methylates guanosine-37 in various tRNAs. This is tRNA (guanine-N(1)-)-methyltransferase from Bordetella parapertussis (strain 12822 / ATCC BAA-587 / NCTC 13253).